Here is a 394-residue protein sequence, read N- to C-terminus: Acetyl-CoA acetyltransferase (394 aa).

Residue cysteine 89 is the Acyl-thioester intermediate of the active site. Active-site proton acceptor residues include histidine 350 and cysteine 380.

It belongs to the thiolase-like superfamily. Thiolase family. In terms of assembly, homotetramer.

The protein localises to the cytoplasm. The catalysed reaction is 2 acetyl-CoA = acetoacetyl-CoA + CoA. It functions in the pathway biopolymer metabolism; poly-(R)-3-hydroxybutanoate biosynthesis. It participates in metabolic intermediate biosynthesis; (R)-mevalonate biosynthesis; (R)-mevalonate from acetyl-CoA: step 1/3. The sequence is that of Acetyl-CoA acetyltransferase from Thiocystis violacea.